We begin with the raw amino-acid sequence, 437 residues long: Adenylosuccinate synthetase (437 aa).

Residues 12-18 and 40-42 contribute to the GTP site; these read GDEGKGK and GHT. Asp13 (proton acceptor) is an active-site residue. The Mg(2+) site is built by Asp13 and Gly40. IMP-binding positions include 13 to 16, 38 to 41, Thr128, Arg142, Gln223, Thr238, and Arg302; these read DEGK and NAGH. The active-site Proton donor is His41. Residues 119–138 are disordered; it reads QRGERRIGTTGRGIGPTYAD. 298-304 contacts substrate; the sequence is TTTGRRR. GTP is bound by residues Arg304, 330–332, and 412–414; these read KLD and SLG.

Belongs to the adenylosuccinate synthetase family. Homodimer. The cofactor is Mg(2+).

Its subcellular location is the cytoplasm. The catalysed reaction is IMP + L-aspartate + GTP = N(6)-(1,2-dicarboxyethyl)-AMP + GDP + phosphate + 2 H(+). Its pathway is purine metabolism; AMP biosynthesis via de novo pathway; AMP from IMP: step 1/2. Plays an important role in the de novo pathway of purine nucleotide biosynthesis. Catalyzes the first committed step in the biosynthesis of AMP from IMP. The chain is Adenylosuccinate synthetase from Synechococcus sp. (strain WH7803).